A 370-amino-acid polypeptide reads, in one-letter code: DNA replication and repair protein RecF (370 aa).

30-37 (GENAQGKT) contacts ATP.

It belongs to the RecF family.

Its subcellular location is the cytoplasm. Functionally, the RecF protein is involved in DNA metabolism; it is required for DNA replication and normal SOS inducibility. RecF binds preferentially to single-stranded, linear DNA. It also seems to bind ATP. This chain is DNA replication and repair protein RecF, found in Staphylococcus aureus (strain USA300).